The following is a 409-amino-acid chain: tRNA-specific 2-thiouridylase MnmA (409 aa).

ATP contacts are provided by residues 43-50 (AMSGGVDS) and Leu-69. Cys-137 acts as the Nucleophile in catalysis. A disulfide bridge connects residues Cys-137 and Cys-235. Gly-161 provides a ligand contact to ATP. Residues 185–187 (KDQ) form an interaction with tRNA region. Cys-235 acts as the Cysteine persulfide intermediate in catalysis.

It belongs to the MnmA/TRMU family.

Its subcellular location is the cytoplasm. It carries out the reaction S-sulfanyl-L-cysteinyl-[protein] + uridine(34) in tRNA + AH2 + ATP = 2-thiouridine(34) in tRNA + L-cysteinyl-[protein] + A + AMP + diphosphate + H(+). Functionally, catalyzes the 2-thiolation of uridine at the wobble position (U34) of tRNA, leading to the formation of s(2)U34. In Caulobacter sp. (strain K31), this protein is tRNA-specific 2-thiouridylase MnmA.